The sequence spans 267 residues: UPF0246 protein Dshi_3333 (267 aa).

The protein belongs to the UPF0246 family.

This is UPF0246 protein Dshi_3333 from Dinoroseobacter shibae (strain DSM 16493 / NCIMB 14021 / DFL 12).